The chain runs to 287 residues: Large ribosomal subunit protein uL2 (287 aa).

The tract at residues 221-287 is disordered; the sequence is RGSVMNPCDH…SKRSRGGRDS (67 aa). Basic residues predominate over residues 258 to 287; the sequence is KTRKRNKPSNRFVLRKRRRTSKRSRGGRDS.

It belongs to the universal ribosomal protein uL2 family. Part of the 50S ribosomal subunit. Forms a bridge to the 30S subunit in the 70S ribosome.

Its function is as follows. One of the primary rRNA binding proteins. Required for association of the 30S and 50S subunits to form the 70S ribosome, for tRNA binding and peptide bond formation. It has been suggested to have peptidyltransferase activity; this is somewhat controversial. Makes several contacts with the 16S rRNA in the 70S ribosome. In Prochlorococcus marinus (strain MIT 9303), this protein is Large ribosomal subunit protein uL2.